The chain runs to 245 residues: Probable phosphatase YpAngola_A2446 (245 aa).

Residues histidine 7, histidine 9, histidine 15, histidine 40, glutamate 73, histidine 101, histidine 131, aspartate 192, and histidine 194 each coordinate Zn(2+).

It belongs to the PHP family. As to quaternary structure, homotrimer. Zn(2+) is required as a cofactor.

This is Probable phosphatase YpAngola_A2446 from Yersinia pestis bv. Antiqua (strain Angola).